Consider the following 489-residue polypeptide: MGANNGKQSGSEGKGSSSISSDLSSSTDQTSTKAPKNAATSEDSDLSMRTVSTPSPALILPPRSSSAVLNGSSTSSSTFGTETIAMVHMPPTSLTHPQRCLRQPRDQQGAPVDILPDHAFLQIFTHLPTNQLCRCARVCRRWYNLAWDPRLWRTIRLTGDVLHVDRALRVLTRRLCQDTPNVCLTVETVMVSGCRRLTDRGLYTVAQSCPELRRLEVAGCYNVSNEAVFEVVSRCPNLEHLDVSGCSKVTCISLTRDVSVKLSPLHGQQISIRFLDMTDCFALEDEGLHTIAAHCTQLTHLYLRRCVRLTDEGLRFLVIYCPGVRELSVSDCRFISDFGLREIAKLEGRLRYLSIAHCSRITDVGVRYVAKYCSRLRYLNARGCEGLTDHGIEHLAKSCLKLKSLDIGKCPLVSDAGLEQLALNSFNLKRLSLKSCESITGRGLQVVAANCFDLQLLNVQDCDVSLEALRFVKRHCKRCIIEHTNPAFF.

Over residues M1–S31 the composition is skewed to low complexity. Positions M1–S76 are disordered. Polar residues predominate over residues T32 to S55. A compositionally biased stretch (low complexity) spans S64–S76. The F-box domain occupies G109 to I155. 11 LRR repeats span residues L168 to G193, C194 to G219, C220 to G245, C251 to D279, C280 to R305, C306 to D331, C332 to H357, C358 to G383, C384 to K409, C410 to S435, and C436 to D461.

Belongs to the FBXL7 family. In terms of assembly, part of the SCF (SKP1-CUL1-F-box) E3 ubiquitin-protein ligase complex SCF(FBXL7).

It localises to the cytoplasm. Its subcellular location is the cytoskeleton. It is found in the microtubule organizing center. The protein resides in the centrosome. It functions in the pathway protein modification; protein ubiquitination. Functionally, substrate recognition component of a SCF (SKP1-CUL1-F-box protein) E3 ubiquitin-protein ligase complex which mediates the ubiquitination and subsequent proteasomal degradation of target proteins. The sequence is that of F-box/LRR-repeat protein 7 (fbxl7) from Danio rerio (Zebrafish).